Here is a 267-residue protein sequence, read N- to C-terminus: Putative carbamate hydrolase RutD (267 aa).

Residues 14 to 115 enclose the AB hydrolase-1 domain; that stretch reads PVMVMISGLG…SALVIINGWL (102 aa).

This sequence belongs to the AB hydrolase superfamily. Hydrolase RutD family.

It catalyses the reaction carbamate + 2 H(+) = NH4(+) + CO2. Involved in pyrimidine catabolism. May facilitate the hydrolysis of carbamate, a reaction that can also occur spontaneously. The chain is Putative carbamate hydrolase RutD from Cronobacter turicensis (strain DSM 18703 / CCUG 55852 / LMG 23827 / z3032).